A 158-amino-acid polypeptide reads, in one-letter code: Endoribonuclease YbeY (158 aa).

The Zn(2+) site is built by His117, His121, and His127.

Belongs to the endoribonuclease YbeY family. Zn(2+) serves as cofactor.

It is found in the cytoplasm. In terms of biological role, single strand-specific metallo-endoribonuclease involved in late-stage 70S ribosome quality control and in maturation of the 3' terminus of the 16S rRNA. The protein is Endoribonuclease YbeY of Francisella philomiragia subsp. philomiragia (strain ATCC 25017 / CCUG 19701 / FSC 153 / O#319-036).